We begin with the raw amino-acid sequence, 348 residues long: Putative S-adenosyl-L-methionine-dependent methyltransferase Mb3432 (348 aa).

S-adenosyl-L-methionine contacts are provided by residues D171 and 200 to 201; that span reads DL.

It belongs to the UPF0677 family.

Functionally, exhibits S-adenosyl-L-methionine-dependent methyltransferase activity. This chain is Putative S-adenosyl-L-methionine-dependent methyltransferase Mb3432, found in Mycobacterium bovis (strain ATCC BAA-935 / AF2122/97).